The primary structure comprises 215 residues: Adenylate kinase (215 aa).

10–15 lines the ATP pocket; it reads GAGKGT. An NMP region spans residues 30–59; the sequence is STGDMFRAAIKDQTPLGQEAKSYMDKGELV. AMP is bound by residues T31, R36, 57–59, 85–88, and Q92; these read ELV and GFPR. Residues 126–163 form an LID region; that stretch reads GRRICPTCGATYHVIYNPPKVEGVCDIDGSALVQREDD. R127 is an ATP binding site. Zn(2+) contacts are provided by C130 and C133. 136-137 contacts ATP; that stretch reads TY. 2 residues coordinate Zn(2+): C150 and D153. Residues R160 and R171 each contribute to the AMP site. R199 is a binding site for ATP.

Belongs to the adenylate kinase family. Monomer.

Its subcellular location is the cytoplasm. The catalysed reaction is AMP + ATP = 2 ADP. The protein operates within purine metabolism; AMP biosynthesis via salvage pathway; AMP from ADP: step 1/1. Catalyzes the reversible transfer of the terminal phosphate group between ATP and AMP. Plays an important role in cellular energy homeostasis and in adenine nucleotide metabolism. This is Adenylate kinase from Exiguobacterium sibiricum (strain DSM 17290 / CCUG 55495 / CIP 109462 / JCM 13490 / 255-15).